Here is a 242-residue protein sequence, read N- to C-terminus: DNA repair protein RecO (242 aa).

The protein belongs to the RecO family.

In terms of biological role, involved in DNA repair and RecF pathway recombination. The chain is DNA repair protein RecO from Paracoccus denitrificans (strain Pd 1222).